Here is a 211-residue protein sequence, read N- to C-terminus: Ribosomal RNA large subunit methyltransferase E (211 aa).

Residues Gly60, Trp62, Asp85, Asp101, and Asp126 each contribute to the S-adenosyl-L-methionine site. Lys166 (proton acceptor) is an active-site residue.

The protein belongs to the class I-like SAM-binding methyltransferase superfamily. RNA methyltransferase RlmE family.

Its subcellular location is the cytoplasm. The catalysed reaction is uridine(2552) in 23S rRNA + S-adenosyl-L-methionine = 2'-O-methyluridine(2552) in 23S rRNA + S-adenosyl-L-homocysteine + H(+). Specifically methylates the uridine in position 2552 of 23S rRNA at the 2'-O position of the ribose in the fully assembled 50S ribosomal subunit. The chain is Ribosomal RNA large subunit methyltransferase E from Bordetella petrii (strain ATCC BAA-461 / DSM 12804 / CCUG 43448).